The sequence spans 129 residues: M-zodatoxin-Lt8j (129 aa).

The N-terminal stretch at 1–20 (MKYFVVALALVAAFACIAES) is a signal peptide. The propeptide occupies 21-60 (KPAESEHELAEVEEENELADLEDAVWLEHLADLSDLEEAR).

Belongs to the cationic peptide 06 (cytoinsectotoxin) family. As to expression, expressed by the venom gland.

The protein localises to the secreted. Insecticidal, cytolytic and antimicrobial peptide. Forms voltage-dependent, ion-permeable channels in membranes. At high concentration causes cell membrane lysis. The polypeptide is M-zodatoxin-Lt8j (cit 1-9) (Lachesana tarabaevi (Spider)).